Here is a 221-residue protein sequence, read N- to C-terminus: MVDLRYASGNIFDEKVHEMGIIALGSFLENHGSALPIDTDAKIASYIALNVSISTGAKFLGVVIPSTEYSYVKHGIHDSIEDVITYIKYLVENGRKIGINKFLIINCHGGNTIILDELSKLNSKDCFIKMESVCLTHASTEEVSLGYAVGILSEDNMKTHDPKIYEEIGMVGLKEAREKNEAIDLEAKSVEKNGVFLDKTHGKSLLNDLITNYVEIVRNMI.

4 residues coordinate Fe cation: Glu29, His31, Asp40, and His108.

It belongs to the creatininase superfamily. FAPy deformylase family. Homodimer. Requires Fe(2+) as cofactor. Zn(2+) is required as a cofactor.

It carries out the reaction 2-amino-5-formylamino-6-(5-phospho-D-ribosylamino)pyrimidin-4(3H)-one + H2O = 2,5-diamino-6-(1-D-ribosylamino)pyrimidin-4(3H)-one 5'-phosphate + formate + H(+). The protein operates within cofactor biosynthesis; coenzyme F420 biosynthesis. Its pathway is cofactor biosynthesis; riboflavin biosynthesis. In terms of biological role, catalyzes the hydrolysis of the formamide of 2-amino-5-formylamino-6-ribosylamino-4(3H)-pyrimidinone 5'-monophosphate (FAPy) to form 2,5-diamino-6-ribosylamino-4(3H)-pyrimidinone 5'-phosphate (APy). This is 2-amino-5-formylamino-6-ribosylaminopyrimidin-4(3H)-one 5'-monophosphate deformylase from Methanococcus maripaludis (strain C5 / ATCC BAA-1333).